Consider the following 252-residue polypeptide: Cell division protein ZapD (252 aa).

Belongs to the ZapD family. As to quaternary structure, interacts with FtsZ.

It is found in the cytoplasm. Its function is as follows. Cell division factor that enhances FtsZ-ring assembly. Directly interacts with FtsZ and promotes bundling of FtsZ protofilaments, with a reduction in FtsZ GTPase activity. The chain is Cell division protein ZapD from Chromobacterium violaceum (strain ATCC 12472 / DSM 30191 / JCM 1249 / CCUG 213 / NBRC 12614 / NCIMB 9131 / NCTC 9757 / MK).